Reading from the N-terminus, the 70-residue chain is Small ribosomal subunit protein bS21 (70 aa).

The protein belongs to the bacterial ribosomal protein bS21 family.

The chain is Small ribosomal subunit protein bS21 from Campylobacter jejuni subsp. jejuni serotype O:23/36 (strain 81-176).